Here is a 374-residue protein sequence, read N- to C-terminus: Probable plastid-lipid-associated protein 3, chloroplastic (374 aa).

A chloroplast-targeting transit peptide spans methionine 1 to alanine 46. Positions proline 19–glutamate 148 are disordered. The segment covering glycine 28–proline 54 has biased composition (low complexity). Composition is skewed to pro residues over residues alanine 64–proline 73 and proline 127–valine 136.

Belongs to the PAP/fibrillin family.

It localises to the plastid. The protein localises to the chloroplast. The chain is Probable plastid-lipid-associated protein 3, chloroplastic (PAP3) from Oryza sativa subsp. japonica (Rice).